A 589-amino-acid chain; its full sequence is Kelch-like protein diablo (589 aa).

Residues 1–22 are disordered; the sequence is MGDVLISDRPPSPARLSHTSEK. The BTB domain maps to 41–108; sequence CDVVINVSGR…CYTSHIVVEE (68 aa). Residues 143-245 form the BACK domain; that stretch reads CLGIRAFADT…SPKFLVGTVG (103 aa). 6 Kelch repeats span residues 292–338, 340–386, 387–433, 435–480, 482–527, and 528–574; these read VLFA…VLND, LYAV…VLDG, FLYA…VLGG, LYAI…VFNN, IYAV…VVNG, and QLYA…VMRA.

The protein operates within protein modification; protein ubiquitination. In terms of biological role, probable substrate-specific adapter of an E3 ubiquitin-protein ligase complex which mediates the ubiquitination and subsequent proteasomal degradation of target proteins. May have a role in synapse differentiation and growth. This chain is Kelch-like protein diablo, found in Aedes aegypti (Yellowfever mosquito).